Here is a 76-residue protein sequence, read N- to C-terminus: Adipogenesis regulatory factor (76 aa).

In terms of tissue distribution, expressed in adipose tissue (at protein level). Highly expressed in omental and subcutaneous adipose tissues. Expressed in heart, cornea, liver, kidney and spleen.

Its subcellular location is the nucleus. In terms of biological role, plays a role in fat cell development; promotes adipogenic differentiation and stimulates transcription initiation of master adipogenesis factors like PPARG and CEBPA at early stages of preadipocyte differentiation. Its overexpression confers resistance to the anticancer chemotherapeutic drug cisplatin. This Homo sapiens (Human) protein is Adipogenesis regulatory factor (ADIRF).